The following is a 462-amino-acid chain: Asparagine--tRNA ligase (462 aa).

Belongs to the class-II aminoacyl-tRNA synthetase family. In terms of assembly, homodimer.

Its subcellular location is the cytoplasm. The enzyme catalyses tRNA(Asn) + L-asparagine + ATP = L-asparaginyl-tRNA(Asn) + AMP + diphosphate + H(+). This chain is Asparagine--tRNA ligase, found in Borreliella burgdorferi (strain ATCC 35210 / DSM 4680 / CIP 102532 / B31) (Borrelia burgdorferi).